A 455-amino-acid polypeptide reads, in one-letter code: O-acyltransferase pigD (455 aa).

It belongs to the trichothecene 3-O-acetyltransferase family.

The protein operates within secondary metabolite biosynthesis. Functionally, O-acetyltransferase; part of the gene cluster that mediates the biosynthesis of azaphilone pigments (MonAzPs), a complex mixture of compounds with a common azaphilone skeleton very widely used as food colorants. Within the pathway, pigD directly transfers the fatty acyl chain from the beta-ketoacyl-ACP produced by the pigJ-pigK fatty acid synthase (FAS) to the C-4 alcohol. The first step of the pathway is performed by the nrPKS pigA that forms the hexaketide precursor from successive condensations of five malonyl-CoA units, with a simple acetyl-CoA starter unit. The role of esterase pigG is not clear, but it may play at most a supplementary role in the formation of the benzaldehyde produced by the pigA nrPKS. This very reactive benzaldehyde is intercepted by the pigC ketoreductase that to provide the first stable enzyme-free MonAzPs intermediate, 6-(4-hydroxy-2-oxopentyl)-3-methyl-2,4-dioxocyclohexane carbaldehyde, also known as M7PKS-1. The FAD-dependent monooxygenase pigN hydroxylates M7PKS-1 at C-4, which triggers the formation of the pyran ring. PigJ, pigK and pigD are involved in the acetylation of the pyran ring. PigJ and pigK form the two subunits of a dedicated fungal FAS that produces the side chain fatty acyl moiety of MonAzPs and pigD transfers the fatty acyl chain to the C-4 alcohol. PigM and pigO are involved in the elimination of the omega-1 alcohol. PigM acts as an O-acetyltransferase that synthesizes the putative O-11 acetyl intermediate whereas pigO eliminates acetic acid to yield an intermediate with a C10(11) double bond. The dehydration of the C-11 alcohol followed by the reduction of the C6(7) double bond by the NAD(P)H-dependent oxidoreductase pigE increases the electrophilicity of the C-5 ketone of the resulting acyl benzopyran. This in turn sets up the C-5 ketone for an intramolecular Knoevenagel aldol condensation with the C-20 enol of the side chain. This condensation affords the characteristic linear tricyclic carbon skeletons of the yellow pigments that serve as the common precursors for the classical yellow pigments monascin and ankaflavin, orange pigments rubopunctatin and monascorubrin, and red pigments ribropunctamine and monascorubramine. The FAD-dependent oxidoreductase pigF is especially invoved in the biosynthesis of orange and red pigments via desaturation of C6(7). The sequence is that of O-acyltransferase pigD from Monascus ruber (Mold).